Consider the following 391-residue polypeptide: Coproporphyrin III ferrochelatase (391 aa).

Serine 79 and tyrosine 148 together coordinate Fe-coproporphyrin III. Fe(2+) is bound by residues histidine 211 and glutamate 305.

It belongs to the ferrochelatase family.

Its subcellular location is the cytoplasm. It catalyses the reaction Fe-coproporphyrin III + 2 H(+) = coproporphyrin III + Fe(2+). It functions in the pathway porphyrin-containing compound metabolism; protoheme biosynthesis. Involved in coproporphyrin-dependent heme b biosynthesis. Catalyzes the insertion of ferrous iron into coproporphyrin III to form Fe-coproporphyrin III. The sequence is that of Coproporphyrin III ferrochelatase from Tropheryma whipplei (strain TW08/27) (Whipple's bacillus).